Reading from the N-terminus, the 281-residue chain is Proline iminopeptidase PfmaB (281 aa).

Residues 23-267 enclose the AB hydrolase-1 domain; that stretch reads PLVITLHGGR…NANHSVHVEK (245 aa).

This sequence belongs to the peptidase S33 family.

It catalyses the reaction Release of N-terminal proline from a peptide.. Its function is as follows. Proline iminopeptidase; part of the gene cluster that mediates the biosynthesis of dihydroxynaphthalene (DHN)-melanin, a bluish-green pigment forming a dark layer in the conidial wall that protects the conidia from UV radiations. The first step of the pathway is the production of the pentaketide 1,3,6,8-tetrahydroxynaphthalene (1,3,6,8-THN or T4HN) by the polyketide synthase PfmaE though condensation of acetyl-CoA with malonyl-CoA. T4HN is not stable and easily oxidizes into the stable form flaviolin. T4HN is also substrate of the hydroxynaphthalene reductase PfmaG to yield scytalone. The scytalone dehydratase PfmaJ then reduces scytalone to 1,3,8-THN. 1,3,8-THN is then substrate of the hydroxynaphthalene reductase PfmaI to yield vermelone. Vermelone is further converted by the multicopper oxidase PfmaD to 1,8-DHN. Finally the laccase PFICI_06862 transforms 1,8-DHN to DHN-melanin. The roles of the 5-oxoprolinase PfmaA and the proline iminopeptidase PfmaB within the cluster have not been elucidated yet. In Pestalotiopsis fici (strain W106-1 / CGMCC3.15140), this protein is Proline iminopeptidase PfmaB.